Here is a 284-residue protein sequence, read N- to C-terminus: Shikimate dehydrogenase (NADP(+)) (284 aa).

Residues 20–22 (SIS) and S67 each bind shikimate. Residue K71 is the Proton acceptor of the active site. Residue D83 participates in NADP(+) binding. Residues N92 and D107 each coordinate shikimate. Residues 129-133 (GAGGA) and I227 each bind NADP(+). Y229 provides a ligand contact to shikimate. G250 is an NADP(+) binding site.

It belongs to the shikimate dehydrogenase family. Homodimer.

It catalyses the reaction shikimate + NADP(+) = 3-dehydroshikimate + NADPH + H(+). The protein operates within metabolic intermediate biosynthesis; chorismate biosynthesis; chorismate from D-erythrose 4-phosphate and phosphoenolpyruvate: step 4/7. In terms of biological role, involved in the biosynthesis of the chorismate, which leads to the biosynthesis of aromatic amino acids. Catalyzes the reversible NADPH linked reduction of 3-dehydroshikimate (DHSA) to yield shikimate (SA). This Streptococcus pneumoniae (strain JJA) protein is Shikimate dehydrogenase (NADP(+)).